A 676-amino-acid chain; its full sequence is Maternal embryonic leucine zipper kinase (676 aa).

Residues 13–265 (YEVYETIGSG…VKHLLDHPWV (253 aa)) enclose the Protein kinase domain. Residues 19 to 27 (IGSGGFAKV) and Lys42 contribute to the ATP site. The Proton acceptor role is filled by Asp134. A Phosphothreonine; by autocatalysis modification is found at Thr169. Ser173 carries the phosphoserine; by autocatalysis modification. Residues 284-323 (IDEDCITEMAVTFKQSKQRTIQLVSEWKYDQITATYLLLL) form a UBA-like region. Residues 328–673 (QGRPVRLRAE…VEDILSSSSQ (346 aa)) form an autoinhibitory region region. Residues 423–443 (EHSRPCRQKPERRERTKENKE) are compositionally biased toward basic and acidic residues. Residues 423–518 (EHSRPCRQKP…QQNGQQGELN (96 aa)) are disordered. Over residues 462–489 (TPTSSRKVKSNRTVMTTPNHNNNKSSEV) the composition is skewed to polar residues. Over residues 508–518 (QQQNGQQGELN) the composition is skewed to low complexity. The KA1 domain maps to 624–673 (SDFGKVTMQFELEVCLLQKPEVVGIRRQRLKGDAWVYKHLVEDILSSSSQ).

It belongs to the protein kinase superfamily. CAMK Ser/Thr protein kinase family. SNF1 subfamily. Post-translationally, autophosphorylated: autophosphorylation of the T-loop at Thr-169 and Ser-173 is required for activation. As to expression, strongly expressed in the eye, gill, kidney, spleen, muscle, ovary and testis and weakly in the heart, liver, and gut. Expressed in the brain and lateral mesoderm at 12 hours post-fertilization (hpf).

It localises to the cell membrane. The catalysed reaction is L-seryl-[protein] + ATP = O-phospho-L-seryl-[protein] + ADP + H(+). The enzyme catalyses L-threonyl-[protein] + ATP = O-phospho-L-threonyl-[protein] + ADP + H(+). With respect to regulation, activated by autophosphorylation of the T-loop at Thr-169 and Ser-173: in contrast to other members of the SNF1 subfamily, phosphorylation at Thr-169 is not mediated by STK11/LKB1 but via autophosphorylation instead. Functionally, serine/threonine-protein kinase involved in various processes such as cell cycle regulation, self-renewal of stem cells, apoptosis and splicing regulation. Also plays a role in primitive hematopoiesis, possibly by affecting the expression of genes critical for hematopoiesis. This chain is Maternal embryonic leucine zipper kinase (melk), found in Danio rerio (Zebrafish).